The chain runs to 901 residues: Alanine--tRNA ligase (901 aa).

Positions 581, 585, 684, and 688 each coordinate Zn(2+).

This sequence belongs to the class-II aminoacyl-tRNA synthetase family. Requires Zn(2+) as cofactor.

It is found in the cytoplasm. The catalysed reaction is tRNA(Ala) + L-alanine + ATP = L-alanyl-tRNA(Ala) + AMP + diphosphate. Catalyzes the attachment of alanine to tRNA(Ala) in a two-step reaction: alanine is first activated by ATP to form Ala-AMP and then transferred to the acceptor end of tRNA(Ala). Also edits incorrectly charged Ser-tRNA(Ala) and Gly-tRNA(Ala) via its editing domain. This chain is Alanine--tRNA ligase, found in Mycobacterium marinum (strain ATCC BAA-535 / M).